A 389-amino-acid chain; its full sequence is Acetyl-CoA:oxalate CoA-transferase (389 aa).

Residue His-237 is part of the active site.

Homodimer.

It catalyses the reaction oxalate + acetyl-CoA = oxalyl-CoA + acetate. Involved in the catabolism of oxalate and in the adapatation to low pH. ACOCT serves to prime the oxalate-induced acid tolerance response (ATR) cycle by producing substrate for oxalyl-CoA decarboxylase (OXC) and formyl-coenzyme A transferase (FCOCT). Catalyzes the reversible conversion of acetyl-CoA and oxalate to oxalyl-CoA and acetate. It can also use formyl-CoA and oxalate to produce oxalyl-CoA and formate with significantly reduced specific activity. The chain is Acetyl-CoA:oxalate CoA-transferase (uctC) from Acetobacter aceti.